Reading from the N-terminus, the 315-residue chain is MRRAKITIVGAGNVGATCAHWCAAAELGDVVLLDIPRTEDMPRGKALDLMQASPIMGFDSNIVGTTDYADTADSDVIVVTAGLPRKPGMSRDDLLATNAKIVTSVAEEIKATSPNAVIIVVSNPLDAMVQQMFKVTGFEPAKVIGQAGVLDTARYRTFLAMELGVSVEDISALLMGGHGDTMVPVPSCTSVGGIPVTQLISKERLDEIVDRTRKGGAEIVSLLKTGSAYYAPAAACAQMVEAIVKDKKRVIPVAAYCDSEYGVGGYYVGVPVVLGSGGVERIIELSLTDEETKAFQNSVDAVKSLVSTMDGLLAE.

Residues 10–15 and aspartate 34 each bind NAD(+); that span reads GAGNVG. Substrate contacts are provided by arginine 85 and arginine 91. Residues asparagine 98 and 121–123 contribute to the NAD(+) site; that span reads VSN. The substrate site is built by asparagine 123 and arginine 154. Histidine 178 (proton acceptor) is an active-site residue.

It belongs to the LDH/MDH superfamily. MDH type 3 family.

It catalyses the reaction (S)-malate + NAD(+) = oxaloacetate + NADH + H(+). Catalyzes the reversible oxidation of malate to oxaloacetate. This is Malate dehydrogenase from Rhodopirellula baltica (strain DSM 10527 / NCIMB 13988 / SH1).